We begin with the raw amino-acid sequence, 926 residues long: Progesterone receptor (926 aa).

The disordered stretch occupies residues 1–48; sequence MTELQAKDPQVLHTSGASPSPPHIGSPLLARLDSGPFQGSQHSDVSSV. An AF3; mediates transcriptional activation (in isoform B) region spans residues 1 to 165; sequence MTELQAKDPQ…PATKGLLSPL (165 aa). The modulating, Pro-Rich stretch occupies residues 1-559; that stretch reads MTELQAKDPQ…YGFDSLPQKI (559 aa). Lysine 7 participates in a covalent cross-link: Glycyl lysine isopeptide (Lys-Gly) (interchain with G-Cter in SUMO). Position 20 is a phosphoserine (serine 20). Residues 56–60 carry the LXXL motif 1 motif; sequence LDGLL. Serine 82 carries the phosphoserine modification. Positions 116 to 120 match the LXXL motif 1 motif; that stretch reads LDSLL. Residues serine 131 and serine 163 each carry the phosphoserine modification. A mediates transcriptional transrepression (in isoform A) region spans residues 166 to 305; sequence MSRPEIKAGD…LATTVVDFIH (140 aa). Residues 168–256 are disordered; sequence RPEIKAGDSS…GTGSGGGVAA (89 aa). Positions 184–188 match the Nuclear localization signal motif; the sequence is KVLPK. Serine 191 and serine 214 each carry phosphoserine. Residue serine 294 is modified to Phosphoserine; by MAPK1. The interval 327 to 364 is disordered; it reads DSYDGGATAQGPFAPPRGSPSAPSPPVPCGDFPDCTYP. Pro residues predominate over residues 339 to 354; that stretch reads FAPPRGSPSAPSPPVP. Serine 345 is modified (phosphoserine; by MAPK). Residue lysine 388 forms a Glycyl lysine isopeptide (Lys-Gly) (interchain with G-Cter in SUMO); alternate linkage. Residue lysine 388 forms a Glycyl lysine isopeptide (Lys-Gly) (interchain with G-Cter in ubiquitin); alternate linkage. The tract at residues 391–447 is disordered; the sequence is EEGADAAVRSPRPYLSAGASSSTFPDFPLAPAPQRAPSSRPGEAAVAGGPSSAAVSP. Residue serine 400 is modified to Phosphoserine; by CDK2. Over residues 422-447 the composition is skewed to low complexity; that stretch reads APQRAPSSRPGEAAVAGGPSSAAVSP. The tract at residues 453-539 is AF1; mediates transcriptional activation; sequence SALECILYKA…VYPPYLNYLR (87 aa). Lysine 524 is covalently cross-linked (Glycyl lysine isopeptide (Lys-Gly) (interchain with G-Cter in SUMO)). The nuclear receptor DNA-binding region spans 557–632; the sequence is QKICLICGDE…AGMVLGGRKF (76 aa). NR C4-type zinc fingers lie at residues 560–580 and 596–615; these read CLIC…CGSC and CAGR…CPAC. Serine 669 carries the phosphoserine modification. In terms of domain architecture, NR LBD spans 672–906; it reads QEIQLVPPLI…EFPEMMSEVI (235 aa). The AF2; mediates transcriptional activation stretch occupies residues 673 to 926; it reads EIQLVPPLIN…MVKPLLFHKK (254 aa). Position 759 (arginine 759) interacts with progesterone.

Belongs to the nuclear hormone receptor family. NR3 subfamily. Interacts with SMARD1 and UNC45A. Interacts with CUEDC2; the interaction promotes ubiquitination, decreases sumoylation, and represses transcriptional activity. Interacts with PIAS3; the interaction promotes sumoylation of PR in a hormone-dependent manner, inhibits DNA-binding, and alters nuclear export. Interacts with SP1; the interaction requires ligand-induced phosphorylation on Ser-294 by ERK1/2 MAPK. Interacts with PRMT2. Isoform A interacts with NCOR2. Isoform B (but not isoform A) interacts with NCOA2 and NCOA1. Isoform B (but not isoform A) interacts with KLF9. Phosphorylated on multiple serine sites. Several of these sites are hormone-dependent. Phosphorylation on Ser-294 is highly hormone-dependent and modulates ubiquitination and sumoylation on Lys-388. Phosphorylation on Ser-345 also requires induction by hormone. Basal phosphorylation on Ser-82, Ser-163, Ser-191 and Ser-400 is increased in response to progesterone and can be phosphorylated in vitro by the CDK2-A1 complex. Increased levels of phosphorylation on Ser-400 also in the presence of EGF, heregulin, IGF, PMA and FBS. Phosphorylation at this site by CDK2 is ligand-independent, and increases nuclear translocation and transcriptional activity. Phosphorylation at Ser-163 and Ser-294, but not at Ser-191, is impaired during the G(2)/M phase of the cell cycle. Phosphorylation on Ser-345 by ERK1/2 MAPK is required for interaction with SP1. Post-translationally, sumoylation is hormone-dependent and represses transcriptional activity. Sumoylation on all three sites is enhanced by PIAS3. Desumoylated by SENP1. Sumoylation on Lys-388, the main site of sumoylation, is repressed by ubiquitination on the same site, and modulated by phosphorylation at Ser-294. In terms of processing, ubiquitination is hormone-dependent and represses sumoylation on the same site. Promoted by MAPK-mediated phosphorylation on Ser-294. Ubiquitinated by UBR5, leading to its degradation: UBR5 specifically recognizes and binds ligand-bound PGR when it is not associated with coactivators (NCOAs). In presence of NCOAs, the UBR5-degron is not accessible, preventing its ubiquitination and degradation. Palmitoylated by ZDHHC7 and ZDHHC21. Palmitoylation is required for plasma membrane targeting and for rapid intracellular signaling via ERK and AKT kinases and cAMP generation. As to expression, expression of isoform A and isoform B in mammary epithelial cells is temporally and spatially separated during normal mammary gland development. Isoform A and isoform B are expressed in the pituitary. Isoform A and isoform B are differentially expressed in the ovary and oviduct, and the level of expression is dependent on both the cell type and estrous cycle stage.

Its subcellular location is the nucleus. It localises to the cytoplasm. In terms of biological role, the steroid hormones and their receptors are involved in the regulation of eukaryotic gene expression and affect cellular proliferation and differentiation in target tissues. Depending on the isoform, progesterone receptor functions as a transcriptional activator or repressor. Its function is as follows. Ligand-dependent transdominant repressor of steroid hormone receptor transcriptional activity including repression of its isoform B, MR and ER. Transrepressional activity may involve recruitment of corepressor NCOR2. Functionally, transcriptional activator of several progesteron-dependent promoters in a variety of cell types. Involved in activation of SRC-dependent MAPK signaling on hormone stimulation. This Mus musculus (Mouse) protein is Progesterone receptor (Pgr).